A 109-amino-acid chain; its full sequence is Polyprenyl transferase subC (109 aa).

Helical transmembrane passes span 39–59 (LFCV…NDWI) and 84–104 (QAFV…HVML).

This sequence belongs to the UbiA prenyltransferase family. Requires Mg(2+) as cofactor.

It localises to the membrane. Its pathway is secondary metabolite biosynthesis; terpenoid biosynthesis. Polyprenyl transferase; part of the gene cluster that mediates the biosynthesis of the immunosuppressants subglutinols, meroterpenoids consisting of an alpha-pyrone (4-hydroxy-5,6-dimethyl-2-pyrone) moiety attached to a decalin core fused to a five-membered cyclic ether carrying a prenylside chain. The first step of the pathway is the synthesis of the alpha-pyrone moiety by the polyketide synthase subA via condensation of one acetyl-CoA starter unit with 3 malonyl-CoA units and 2 methylations. The alpha-pyrone is then combined with geranylgeranyl pyrophosphate (GGPP) formed by the GGPP synthase subD through the action of the prenyltransferase subC to yield a linear alpha-pyrone diterpenoid. Subsequent steps in the subglutinol biosynthetic pathway involve the decalin core formation, which is thought to be initiated by the epoxidation of the C10-C11 olefin by the FAD-dependent oxidoreductase subE. The following cyclization cascade would be catalyzed by the terpene cyclase subB. Lastly, the FAD-dependent dehydrogenase subF probably catalyzes the five-membered cyclic ether formation to complete the formation of subglutinol A. Subsequent redox reactions appear to give rise to subglutinol C and D, however, it remains unclear which enzymes are responsible for these transformations. SubD may have secondary function in the conversion of the identified subglutinols to subglutinol analog 45, which seems to be the major product of the cluster. The sequence is that of Polyprenyl transferase subC from Metarhizium robertsii (strain ARSEF 23 / ATCC MYA-3075) (Metarhizium anisopliae (strain ARSEF 23)).